The following is a 220-amino-acid chain: Deoxyribose-phosphate aldolase (220 aa).

The active-site Proton donor/acceptor is aspartate 89. The active-site Schiff-base intermediate with acetaldehyde is lysine 151. Lysine 180 (proton donor/acceptor) is an active-site residue.

Belongs to the DeoC/FbaB aldolase family. DeoC type 1 subfamily.

Its subcellular location is the cytoplasm. It carries out the reaction 2-deoxy-D-ribose 5-phosphate = D-glyceraldehyde 3-phosphate + acetaldehyde. It participates in carbohydrate degradation; 2-deoxy-D-ribose 1-phosphate degradation; D-glyceraldehyde 3-phosphate and acetaldehyde from 2-deoxy-alpha-D-ribose 1-phosphate: step 2/2. Functionally, catalyzes a reversible aldol reaction between acetaldehyde and D-glyceraldehyde 3-phosphate to generate 2-deoxy-D-ribose 5-phosphate. This chain is Deoxyribose-phosphate aldolase, found in Streptococcus uberis (strain ATCC BAA-854 / 0140J).